Here is a 353-residue protein sequence, read N- to C-terminus: Endophilin-A1 (353 aa).

The tract at residues 1–21 is membrane-binding amphipathic helix; it reads MSVAGLKKQFHKATQKVSEKV. Residues 1–27 form a disordered region; sequence MSVAGLKKQFHKATQKVSEKVGGAEGT. Residues 1–125 are binds and tubulates liposomes; it reads MSVAGLKKQF…DVGEAMKELS (125 aa). The BAR domain maps to 18-249; sequence SEKVGGAEGT…LEDRIKEASS (232 aa). The required for dimerization upon membrane association stretch occupies residues 60-87; the sequence is PNPASRAKLSMINTMSKIRGQEKGPGYP. The stretch at 181 to 201 forms a coiled coil; it reads EELRQALEKFDESKEIAESSM. A compositionally biased stretch (basic and acidic residues) spans 243-257; the sequence is RIKEASSQPKREYQP. Residues 243–290 are disordered; that stretch reads RIKEASSQPKREYQPKPRMSLDFTSGGDNTQHNGGISHATTPKPAGAH. Residues 264–282 show a composition bias toward polar residues; the sequence is DFTSGGDNTQHNGGISHAT. The 60-residue stretch at 291-350 folds into the SH3 domain; that stretch reads MDQPCCRALYDFEPENEGELGFKEGDIITLTNQIDENWYEGMLHGQSGFFPINYVDILVP.

The protein belongs to the endophilin family. Monomer; in cytoplasm. Homodimer; when associated with membranes. Associates with MAP4K3. This interaction appears to regulate MAP4K3-mediated JNK activation. Interacts with SYNJ1 and DNM1. As to expression, highly expressed in brain.

It is found in the cytoplasm. The protein localises to the membrane. It localises to the early endosome. The protein resides in the presynapse. Its function is as follows. Implicated in synaptic vesicle endocytosis. May recruit other proteins to membranes with high curvature. This chain is Endophilin-A1, found in Gallus gallus (Chicken).